Consider the following 533-residue polypeptide: Thromboxane-A synthase (533 aa).

Residues 1–10 are Cytoplasmic-facing; that stretch reads MEVLGLLKFE. A helical membrane pass occupies residues 11–31; that stretch reads VSGTVVTVTLSVVLLALLKWY. The Lumenal segment spans residues 32-75; that stretch reads STSAFSRLRKLGIRHPEPSPFVGNLMFFRQGFWESHLELRERYG. Residues 76 to 96 form a helical membrane-spanning segment; that stretch reads PLCGYYLGRRMYIVISDPDMI. The Cytoplasmic portion of the chain corresponds to 97 to 223; that stretch reads KEVLVENFSN…QRVFAFSTPR (127 aa). A helical transmembrane segment spans residues 224–244; that stretch reads PLLALILSFPSIMVPLARILP. At 245–335 the chain is on the lumenal side; sequence NKNRDELNGF…LTVDEIAGQA (91 aa). Residues 336-356 traverse the membrane as a helical segment; sequence FLFLIAGHEITTNTLSFITYL. Topologically, residues 357–533 are cytoplasmic; it reads LATHPECQER…NGVYVKIVSR (177 aa). Residue Cys479 coordinates heme.

This sequence belongs to the cytochrome P450 family. In terms of assembly, monomer. Heme is required as a cofactor. As to expression, expressed in bone marrow, spleen, lung, thymus, liver, uterus, and macrophages.

It localises to the endoplasmic reticulum membrane. The enzyme catalyses prostaglandin H2 = thromboxane A2. It catalyses the reaction prostaglandin H2 = (12S)-hydroxy-(5Z,8E,10E)-heptadecatrienoate + malonaldehyde. It carries out the reaction a hydroperoxyeicosatetraenoate = an oxoeicosatetraenoate + H2O. The catalysed reaction is (15S)-hydroperoxy-(5Z,8Z,11Z,13E)-eicosatetraenoate = 15-oxo-(5Z,8Z,11Z,13E)-eicosatetraenoate + H2O. The enzyme catalyses (15S)-hydroperoxy-(5Z,8Z,11Z,13E)-eicosatetraenoate + AH2 = (15S)-hydroxy-(5Z,8Z,11Z,13E)-eicosatetraenoate + A + H2O. Its function is as follows. Catalyzes the conversion of prostaglandin H2 (PGH2) to thromboxane A2 (TXA2), a potent inducer of blood vessel constriction and platelet aggregation. Also cleaves PGH2 to 12-hydroxy-heptadecatrienoicacid (12-HHT) and malondialdehyde, which is known to act as a mediator of DNA damage. 12-HHT and malondialdehyde are formed stoichiometrically in the same amounts as TXA2. Additionally, displays dehydratase activity, toward (15S)-hydroperoxy-(5Z,8Z,11Z,13E)-eicosatetraenoate (15(S)-HPETE) producing 15-KETE and 15-HETE. This is Thromboxane-A synthase (Tbxas1) from Rattus norvegicus (Rat).